A 396-amino-acid polypeptide reads, in one-letter code: uncharacterized protein (396 aa).

12 helical membrane passes run 12–32, 48–68, 78–98, 106–126, 138–158, 165–185, 209–229, 242–262, 271–291, 297–317, 338–358, and 362–382; these read LLAL…SVGL, GLTV…LTSL, LLWI…ASSI, VISA…AADI, IMFT…TFIG, FAFM…GILV, LLLL…VFTY, AGTV…GNMI, PIAA…VLTF, AAGL…VPGL, AMNI…GGVI, and IGLI…VILT.

The protein belongs to the major facilitator superfamily.

It is found in the cell membrane. This is an uncharacterized protein from Bacillus subtilis (strain 168).